Here is a 502-residue protein sequence, read N- to C-terminus: Phenylacetaldehyde dehydrogenase (502 aa).

Gly-251 to Gly-256 contributes to the NAD(+) binding site. Residues Glu-273 and Cys-307 contribute to the active site.

It belongs to the aldehyde dehydrogenase family.

It catalyses the reaction 2-phenylacetaldehyde + NAD(+) + H2O = 2-phenylacetate + NADH + 2 H(+). Its pathway is aromatic compound metabolism. Its function is as follows. Phenylacetaldehyde dehydrogenase that catalyzes the last step in the aerobic styrene degradation pathway by mediating oxidation of phenylacetaldehyde to phenylacetic acid. This Pseudomonas fluorescens protein is Phenylacetaldehyde dehydrogenase (styD).